Here is a 299-residue protein sequence, read N- to C-terminus: Oxygen-dependent coproporphyrinogen-III oxidase (299 aa).

Serine 92 serves as a coordination point for substrate. A divalent metal cation contacts are provided by histidine 96 and histidine 106. Residue histidine 106 is the Proton donor of the active site. Position 108 to 110 (108 to 110) interacts with substrate; that stretch reads NVR. Positions 145 and 175 each coordinate a divalent metal cation. Residues 240–275 are important for dimerization; it reads YVEFNLVWDRGTLFGLQTGGRTESILMSMPPLVRWE. A substrate-binding site is contributed by 258 to 260; it reads GGR.

This sequence belongs to the aerobic coproporphyrinogen-III oxidase family. As to quaternary structure, homodimer. Requires a divalent metal cation as cofactor.

Its subcellular location is the cytoplasm. It catalyses the reaction coproporphyrinogen III + O2 + 2 H(+) = protoporphyrinogen IX + 2 CO2 + 2 H2O. It functions in the pathway porphyrin-containing compound metabolism; protoporphyrin-IX biosynthesis; protoporphyrinogen-IX from coproporphyrinogen-III (O2 route): step 1/1. Involved in the heme biosynthesis. Catalyzes the aerobic oxidative decarboxylation of propionate groups of rings A and B of coproporphyrinogen-III to yield the vinyl groups in protoporphyrinogen-IX. The chain is Oxygen-dependent coproporphyrinogen-III oxidase from Shigella dysenteriae serotype 1 (strain Sd197).